The sequence spans 341 residues: MSTWPEVLGALVAGSDLSADQTAWAMGEILSGEATVAQIAGFAIALRAKGETVEEVSGLVDTMYALATPISVPGRLLDIVGTGGDRSMSVNISTMSAIVAAGAGARVVKHGNRSASSQSGSADVLESLGIRLDLPAARLAEIAAEVGITFCFAAAFHPAMRYAAVPRRELGVGTTFNFLGPLTNPAHAHAQAIGCADPRMAPVMAGVFARRGVDAWVFRGDDGLDELTTTTTSRLWWVHGGEVRETSVDPADLGIARAEAGALRGGDAAHNAEVVRRLLAGETGAVRDAVVLNAGAALAVYDEPGSAPDQALVAGVERARESLDSGAAARVLDRWVAATAR.

5-phospho-alpha-D-ribose 1-diphosphate-binding positions include Gly-81, 84 to 85, Ser-89, 91 to 94, 109 to 117, and Ser-121; these read GD, NIST, and KHGNRSASS. An anthranilate-binding site is contributed by Gly-81. Residue Ser-93 coordinates Mg(2+). Anthranilate is bound at residue Asn-112. Position 167 (Arg-167) interacts with anthranilate. Mg(2+) contacts are provided by Asp-225 and Glu-226.

The protein belongs to the anthranilate phosphoribosyltransferase family. In terms of assembly, homodimer. Requires Mg(2+) as cofactor.

It carries out the reaction N-(5-phospho-beta-D-ribosyl)anthranilate + diphosphate = 5-phospho-alpha-D-ribose 1-diphosphate + anthranilate. The protein operates within amino-acid biosynthesis; L-tryptophan biosynthesis; L-tryptophan from chorismate: step 2/5. Its function is as follows. Catalyzes the transfer of the phosphoribosyl group of 5-phosphorylribose-1-pyrophosphate (PRPP) to anthranilate to yield N-(5'-phosphoribosyl)-anthranilate (PRA). The chain is Anthranilate phosphoribosyltransferase from Nocardioides sp. (strain ATCC BAA-499 / JS614).